The following is a 575-amino-acid chain: Carboxylesterase 5A (575 aa).

A signal peptide spans 1–20 (MSGNWVHPGQILIWAIWVLA). A disulfide bond links cysteine 94 and cysteine 121. Serine 226 (acyl-ester intermediate) is an active-site residue. The N-linked (GlcNAc...) asparagine glycan is linked to asparagine 281. Glutamate 345 functions as the Charge relay system in the catalytic mechanism. Asparagine 363 carries an N-linked (GlcNAc...) asparagine glycan. Histidine 454 acts as the Charge relay system in catalysis. Asparagine 513 and asparagine 524 each carry an N-linked (GlcNAc...) asparagine glycan.

The protein belongs to the type-B carboxylesterase/lipase family. In terms of processing, N-glycosylated.

The protein localises to the secreted. It carries out the reaction a carboxylic ester + H2O = an alcohol + a carboxylate + H(+). Functionally, involved in the detoxification of xenobiotics and in the activation of ester and amide prodrugs. The protein is Carboxylesterase 5A (CES5A) of Homo sapiens (Human).